A 315-amino-acid polypeptide reads, in one-letter code: tRNA-specific adenosine deaminase subunit tad3 (315 aa).

The CMP/dCMP-type deaminase domain occupies 158 to 299 (KRIESILEDL…AELNHRYLAY (142 aa)). Residues His211, Cys253, and Cys256 each contribute to the Zn(2+) site.

It belongs to the cytidine and deoxycytidylate deaminase family. ADAT3 subfamily. In terms of assembly, heterodimer with Tad2.

The protein localises to the cytoplasm. It localises to the nucleus. Structural subunit of tRNA-specific adenosine deaminase, which deaminates adenosine-34 (the first, also called wobble position of the anticodon) to inosine in many tRNAs. Inosine-34 allows the decoding of 3 different nucleotides at the third position of mRNA codons, as inosine is able to pair with U, C, and A. The wobble inosine tRNA modification is essential for cell cycle progression in the G1/S and G2/M transitions in fission yeast. The sequence is that of tRNA-specific adenosine deaminase subunit tad3 (tad3) from Schizosaccharomyces pombe (strain 972 / ATCC 24843) (Fission yeast).